A 297-amino-acid chain; its full sequence is Beta-glucoside kinase (297 aa).

5 to 11 (AFDIGGT) provides a ligand contact to ATP.

It belongs to the ROK (NagC/XylR) family. In terms of assembly, homotetramer.

The catalysed reaction is D-cellobiose + ATP = 6-phospho-beta-D-glucosyl-(1-&gt;4)-D-glucose + ADP + H(+). With respect to regulation, is inhibited by N-ethylmaleimide in vitro, but ATP affords considerable protection against the inhibitor. Catalyzes the ATP-dependent phosphorylation of a wide variety of beta-D-glucosides, to produce 6-phospho-beta-D-glucosides including cellobiose-6'-P, gentiobiose-6'-P, cellobiitol-6-P, salicin-6-P, and arbutin-6-P. Is not able to phosphorylate alpha-D-glucosides. May have a dual role of kinase and transcriptional regulator of the cellobiose-PTS operon. This Klebsiella pneumoniae protein is Beta-glucoside kinase (bglK).